Here is a 159-residue protein sequence, read N- to C-terminus: Betainyl-CoA thioesterase (159 aa).

This sequence belongs to the betainyl-CoA thioesterase family.

It catalyses the reaction N,N,N-trimethylglycyl-CoA + H2O = glycine betaine + CoA + H(+). Its pathway is amine and polyamine metabolism; carnitine metabolism. Catalyzes the cleavage of betainyl-CoA (N,N,N-trimethylglycyl-CoA) into glycine betaine and coenzyme A. Is involved in a L-carnitine degradation pathway that allows P.aeruginosa to grow on L-carnitine as the sole source of carbon and nitrogen. This chain is Betainyl-CoA thioesterase, found in Pseudomonas aeruginosa (strain ATCC 15692 / DSM 22644 / CIP 104116 / JCM 14847 / LMG 12228 / 1C / PRS 101 / PAO1).